Here is a 900-residue protein sequence, read N- to C-terminus: MPPPQHPPNYYAPRRSISTITGPNRRDVDAFYQNNFPEKNGGSSGEHVPEYQASGQQHRPSIMSGQSHQNNHLPTKNYSYEPLRFSPPNVTPPPLQFSTNTDGNRKNQRVRFNELPNYSTPNHYSVPPRKCSLAPNFFSSQNSHHMYPDQYTPRTWQNNEFMPNHQVHPYHANHQQQHPQQHWRNQAASNGNHNPMYMRKHSAGHGIEIKLDHVDNPFGNPSHDMMDVTSGQPVKSEMLSPIKMETTDPSQQIASPSFLMTSTSLLKQHLHKKSHHNVPSRKASIMALKSQLRTPRGTPLNISTVPGTELPYTPPPILAPMRNGSGLFCQIVKSANSSLPVAEQSPDAPSCSTNGVDGDMKHLMNGKKRSEDGDGPSRKNGFFYMAQQMNQTNFANELEALRKESWASTSSADEKMQTERKESLESIRKASCMSDSYYEIEEGPKISDPNPHINLGKNYQARVKKWCDRQVSTSERDAIEDRDEIVFSSEILQDIDPEQITAFELLACSQACPRAGRNKELALHLLMENKGNIEAAVEDLLRSDTLDWEHYSSVFGYMYNDSVLWTPDEIYQFQDAIYQSEKDFDKVAVELPGKSVKECVQFYYTWKKDCPDDYRKLRNLRRKRQLLDINLQKNQSEEPVVPAKKISIIESGDSDNESNATDSSFIGNGHMEFRDRAFTSPMMSSPREEPIIGLSPSSKDLFGIQKNYQPTAPRAHHTPSASASKKGAQPSADGFFHCRLCDKCFEKVKSLNAHMKSHAMKARAEQEAKAHDAQVAAAAAAQLTSAVGNVVGNPVATSPLNSFANGHLGISIPSTIGNLTPQQLTPQQLNLNQQLQTQLNSLSNQMSLNSPLTPQQQLQQFTQQHLMARAMQQNLFQPVTSTPLVQPTHPLIQAGLHSIN.

3 disordered regions span residues 1 to 75, 340 to 380, and 406 to 425; these read MPPP…HLPT, PVAE…SRKN, and WAST…ESLE. Residues 53–75 are compositionally biased toward polar residues; that stretch reads ASGQQHRPSIMSGQSHQNNHLPT. 2 stretches are compositionally biased toward basic and acidic residues: residues 358-377 and 412-425; these read GDMK…DGPS and ADEK…ESLE. Residues 451-544 form the ELM2 domain; sequence PHINLGKNYQ…AAVEDLLRSD (94 aa). The SANT domain occupies 560-611; the sequence is NDSVLWTPDEIYQFQDAIYQSEKDFDKVAVELPGKSVKECVQFYYTWKKDCP. Residues 710-729 are disordered; sequence PTAPRAHHTPSASASKKGAQ. The C2H2-type zinc-finger motif lies at 736-758; that stretch reads FHCRLCDKCFEKVKSLNAHMKSH.

In terms of assembly, may be a component of a histone deacetylase complex containing saeg-2, saeg-1 and hda-2. May interact with egl-4. Ubiquitously expressed.

It localises to the nucleus. In terms of biological role, as a likely component of a histone deacetylase complex, together with saeg-2 and hda-2, functions downstream of the cAMP-dependent kinase egl-4 to regulate the expression of genes required for egg-laying and foraging. This chain is Suppressor of activated egl-4 protein 1, found in Caenorhabditis elegans.